The sequence spans 315 residues: Phosphatidylglycerol--prolipoprotein diacylglyceryl transferase (315 aa).

The next 2 membrane-spanning stretches (helical) occupy residues 19–39 and 93–113; these read FTIH…VWIL and VWEG…VAFL. R141 provides a ligand contact to a 1,2-diacyl-sn-glycero-3-phospho-(1'-sn-glycerol). Helical transmembrane passes span 188 to 208 and 256 to 276; these read LFHP…ALII and VWTA…LYQY.

It belongs to the Lgt family.

Its subcellular location is the cell membrane. The catalysed reaction is L-cysteinyl-[prolipoprotein] + a 1,2-diacyl-sn-glycero-3-phospho-(1'-sn-glycerol) = an S-1,2-diacyl-sn-glyceryl-L-cysteinyl-[prolipoprotein] + sn-glycerol 1-phosphate + H(+). The protein operates within protein modification; lipoprotein biosynthesis (diacylglyceryl transfer). Catalyzes the transfer of the diacylglyceryl group from phosphatidylglycerol to the sulfhydryl group of the N-terminal cysteine of a prolipoprotein, the first step in the formation of mature lipoproteins. This Bifidobacterium longum (strain NCC 2705) protein is Phosphatidylglycerol--prolipoprotein diacylglyceryl transferase.